The primary structure comprises 271 residues: Aminoglycoside 3'-phosphotransferase (271 aa).

The active-site Proton acceptor is the Asp-198.

The protein belongs to the aminoglycoside phosphotransferase family.

The catalysed reaction is kanamycin A + ATP = kanamycin 3'-phosphate + ADP + H(+). In terms of biological role, resistance to kanamycin and structurally-related aminoglycosides, including amikacin. In Escherichia coli, this protein is Aminoglycoside 3'-phosphotransferase (aphA1).